Consider the following 1244-residue polypeptide: SWI/SNF chromatin remodeling complex subunit swsn-7 (1244 aa).

The region spanning 24–116 (QRKMAEFYNS…YLSKFEQVET (93 aa)) is the ARID domain. Positions 486-496 (FTQGSNQQQNP) are enriched in polar residues. Disordered stretches follow at residues 486-534 (FTQG…GAAP), 556-583 (NREQYSTQSSQPHPPHTNVPPSPSILAH), and 597-619 (DRRTGNLPVRPIAPSTNSGESQL). Positions 497-508 (HHSQGGHQLGHS) are enriched in low complexity. A compositionally biased stretch (polar residues) spans 556–566 (NREQYSTQSSQ). Positions 567-578 (PHPPHTNVPPSP) are enriched in pro residues. Residues 610-619 (PSTNSGESQL) show a composition bias toward polar residues. Residues 623–697 (TEKWIRQNCV…IVAQGIRLIR (75 aa)) constitute a DNA-binding region (RFX-type winged-helix). Positions 1134-1244 (EEEQQKMLSE…TTPVRAGAGI (111 aa)) are disordered. Positions 1142-1158 (SEVPSSASLSSMAGSSS) are enriched in low complexity. Composition is skewed to polar residues over residues 1159–1186 (QLPTVPDSPTSSVASAPMKESTSVSNKP) and 1194–1212 (LNFSSLNEKTPTSPQFTAG). Low complexity predominate over residues 1220 to 1231 (PIQQHIPSQPSP).

Component of the SWI/SNF-B (PBAF) chromatin remodeling complex.

Its subcellular location is the nucleus. In terms of biological role, involved in transcriptional activation and repression of select genes by chromatin remodeling (alteration of DNA-nucleosome topology). Required for the stability of the SWI/SNF chromatin remodeling complex SWI/SNF-B (PBAF). Required for regulation of a stress response gene network, probably as part of the PBAF complex and perhaps acting in concert with histone demethylase jmjc-1. Binds to the ethanol and stress response elements (ESRE) in the promoter regions of hsp-16.1 and hsp-16.2, probably as part of the PBAF complex. This Caenorhabditis elegans protein is SWI/SNF chromatin remodeling complex subunit swsn-7.